The following is a 369-amino-acid chain: UPF0284 protein AM1_5137 (369 aa).

This sequence belongs to the UPF0284 family.

The sequence is that of UPF0284 protein AM1_5137 from Acaryochloris marina (strain MBIC 11017).